The primary structure comprises 560 residues: Formate--tetrahydrofolate ligase (560 aa).

Residue 69–76 participates in ATP binding; the sequence is TPAGEGKS.

The protein belongs to the formate--tetrahydrofolate ligase family.

The enzyme catalyses (6S)-5,6,7,8-tetrahydrofolate + formate + ATP = (6R)-10-formyltetrahydrofolate + ADP + phosphate. Its pathway is one-carbon metabolism; tetrahydrofolate interconversion. The protein is Formate--tetrahydrofolate ligase of Listeria welshimeri serovar 6b (strain ATCC 35897 / DSM 20650 / CCUG 15529 / CIP 8149 / NCTC 11857 / SLCC 5334 / V8).